The primary structure comprises 515 residues: MRDPSSLYAGFPVGSQYESVEPPSLALLSSIYQEQVPAAPGHSYEQCAQPWPPLYREGGTWSPDRGSMHGLSPGTQEGSCTQAEGTKDSLGGDETLSRKSKKKNYHRYAKPPYSYLAMIALVIQNSPEKRLKLSQILKEVSTLFPFFKGDYMGWKDSIRHNLSSNDCFKKVLKDPGKPQAKGNFWTVDVSRIPLDAMKLQNTALTRGGSDYFVQDLAPYILHNYKYEHNVVVYAPHHMPSHASSLPLAEDPHQTNTGGKLNTSFMIDSLLNDLQDVDLPDVPRNIESQRISPAVAINNMWSSAPLLYPQSKPTRNGRGPGFSASHSTYSSSSSSISTISPVGFQETQERSEDLLGRQTQRLGFPTKRPREDDGCSTPSSDTDAGNYSPTEPPKKMPLLSLDLPTSYTKSVAPNVVAPPSVLPFFHFPRFTYYNYGPSPYMTPPYWGFPRPTNPGGDSPRGPQTSLDLDNMLKTVPPNKSVFDVLTSHPGDLVHPSFLGQCLGSSGSPYPSRQGLM.

The disordered stretch occupies residues 55–103 (YREGGTWSPDRGSMHGLSPGTQEGSCTQAEGTKDSLGGDETLSRKSKKK). Over residues 73–84 (PGTQEGSCTQAE) the composition is skewed to polar residues. The segment at residues 110–206 (KPPYSYLAMI…MKLQNTALTR (97 aa)) is a DNA-binding region (fork-head). The tract at residues 307–399 (YPQSKPTRNG…EPPKKMPLLS (93 aa)) is disordered. Residues 322-339 (SASHSTYSSSSSSISTIS) show a composition bias toward low complexity. The segment covering 375-388 (STPSSDTDAGNYSP) has biased composition (polar residues). The SMAD-interaction domain (SID) stretch occupies residues 377–503 (PSSDTDAGNY…PSFLGQCLGS (127 aa)). Residues 402–406 (LPTSY) carry the Fast/FoxH1 motif 1 (FM1) motif. The Fast/FoxH1 motif 2 (FM2) signature appears at 412–418 (PNVVAPP). The SMAD-interaction motif (SIM) signature appears at 467–488 (LDNMLKTVPPNKSVFDVLTSHP).

In terms of assembly, ARF1 contains 2 smad2s, 1 smad4 and 1 foxh1/fast-1 protein. Interaction with smad4 is most likely indirect through interaction with the MH2 domain of smad2. Binds to the MH2 domain of smad3, which can incorporate into the ARF1 complex. The ARF1 and ARF2 complexes are activated by distinct TGF-beta family members; formation of ARF1 is promoted by activin. Interacts (via Fork-head domain) with gtf2ird1/wbscr11 (via repeats 4-5).

It localises to the nucleus. Functionally, transcriptional activator. Recognizes and binds to the DNA sequence 5'-TGT[GT][GT]ATT-3'. Upon TGF-beta induction, forms a transcriptionally active complex with smad2 and smad4 called activin-responsive factor 1 (ARF1), which binds a site on the mix-B/mix.2 promoter called the activin response element (ARE). Binds to activated smads and the ARE with much lower affinity than fast3. Necessary for the first steps in mesoderm specification, directly inducing mesodermal genes. Acts with fast3 to control the convergent extension movements of gastrulation. Binds to the proximal element (PE) of the gsc gene and cooperates with gtf2ird1/wbscr11 and SMAD proteins to regulate gsc transcription. The sequence is that of Forkhead box protein H1 from Xenopus tropicalis (Western clawed frog).